Consider the following 586-residue polypeptide: Exopolysaccharide phosphotransferase SCO6023 (586 aa).

It belongs to the stealth family.

This chain is Exopolysaccharide phosphotransferase SCO6023, found in Streptomyces coelicolor (strain ATCC BAA-471 / A3(2) / M145).